The chain runs to 268 residues: Ribosomal RNA small subunit methyltransferase A (268 aa).

The S-adenosyl-L-methionine site is built by N16, L18, G43, E64, D89, and N110.

It belongs to the class I-like SAM-binding methyltransferase superfamily. rRNA adenine N(6)-methyltransferase family. RsmA subfamily.

It localises to the cytoplasm. It catalyses the reaction adenosine(1518)/adenosine(1519) in 16S rRNA + 4 S-adenosyl-L-methionine = N(6)-dimethyladenosine(1518)/N(6)-dimethyladenosine(1519) in 16S rRNA + 4 S-adenosyl-L-homocysteine + 4 H(+). Functionally, specifically dimethylates two adjacent adenosines (A1518 and A1519) in the loop of a conserved hairpin near the 3'-end of 16S rRNA in the 30S particle. May play a critical role in biogenesis of 30S subunits. The protein is Ribosomal RNA small subunit methyltransferase A of Pseudomonas aeruginosa (strain ATCC 15692 / DSM 22644 / CIP 104116 / JCM 14847 / LMG 12228 / 1C / PRS 101 / PAO1).